The sequence spans 769 residues: Gephyrin (769 aa).

Residues 14-153 (QIRVGVLTVS…LPGSKKGSQE (140 aa)) are MPT Mo-transferase. The segment at 140–349 (LIINLPGSKK…VDITKVARRH (210 aa)) is interaction with GABARAP. 2 disordered regions span residues 181 to 232 (DELE…DSSS) and 260 to 299 (TASLSTTPSESPRAQATSRLSTASCPTPKQIRRPDESKGV). Pro residues predominate over residues 187 to 199 (PSPPPPLSPPPTT). 2 positions are modified to phosphoserine: Ser188 and Ser194. At Thr198 the chain carries Phosphothreonine. Residue Ser200 is modified to Phosphoserine. Cys212 carries the S-palmitoyl cysteine lipid modification. The span at 261-286 (ASLSTTPSESPRAQATSRLSTASCPT) shows a compositional bias: polar residues. At Ser262 the chain carries Phosphoserine. Residues Thr265 and Thr266 each carry the phosphothreonine modification. Phosphoserine is present on residues Ser268 and Ser270. Cys284 is lipidated: S-palmitoyl cysteine. An MPT adenylyltransferase region spans residues 327 to 769 (SSKENILRAS…VVDVMVIGRL (443 aa)). Position 338 is a phosphoserine (Ser338).

It in the N-terminal section; belongs to the MoaB/Mog family. The protein in the C-terminal section; belongs to the MoeA family. As to quaternary structure, homotrimer, homodimer and homooligomer. Interacts with SRGAP2 (via SH3 domain). Interacts with GLRB. Interacts with GABARAP. Interacts with GABRA3. GABRA3 and GLRB occupy overlapping binding sites. Interacts with ARHGAP32; IQSEC3, INSYN1 and INSYN2A. Mg(2+) serves as cofactor. Post-translationally, palmitoylated. Palmitoylation is stimulated by GABA type A receptors activity. Palmitoylation by ZDHHC12 regulates clustering at synapses.

Its subcellular location is the postsynaptic cell membrane. It localises to the cell membrane. The protein resides in the cytoplasm. It is found in the cytosol. The protein localises to the cytoskeleton. Its subcellular location is the cell projection. It localises to the dendrite. The protein resides in the postsynaptic density. It catalyses the reaction molybdopterin + ATP + H(+) = adenylyl-molybdopterin + diphosphate. The catalysed reaction is adenylyl-molybdopterin + molybdate = Mo-molybdopterin + AMP + H(+). The protein operates within cofactor biosynthesis; molybdopterin biosynthesis. Inhibited by copper and tungsten. Its function is as follows. Microtubule-associated protein involved in membrane protein-cytoskeleton interactions. It is thought to anchor the inhibitory glycine receptor (GLYR) to subsynaptic microtubules. Acts as a major instructive molecule at inhibitory synapses, where it also clusters GABA type A receptors. In terms of biological role, also has a catalytic activity and catalyzes two steps in the biosynthesis of the molybdenum cofactor. In the first step, molybdopterin is adenylated. Subsequently, molybdate is inserted into adenylated molybdopterin and AMP is released. This Mus musculus (Mouse) protein is Gephyrin (Gphn).